The chain runs to 87 residues: Small ribosomal subunit protein bS20 (87 aa).

Belongs to the bacterial ribosomal protein bS20 family.

Binds directly to 16S ribosomal RNA. This chain is Small ribosomal subunit protein bS20, found in Corynebacterium urealyticum (strain ATCC 43042 / DSM 7109).